The chain runs to 328 residues: MTATKQHKKVILVGDGAVGSSYAFALVNQGIAQELGIIEIPQLFEKAVGDALDLSHALAFTSPKKIYAAKYEDCADADLVVITAGAPQKPGETRLDLVGKNLAINKSIVTQVIESGFNGIFLVAANPVDILTYATWKFSGFPAEKVIGSGTSLDTARFRQALAEKLDVDARSVHAYIMGEHGDSEFAVWSHANVAGVNLENYLQDVQNFNGEELIDLFEGVRDAAYTIINKKGATFYGIAVALARITKAILDDENAILPLSVFQDGQYGFNEVFIGQPAIVGAHGIVRPVNIPLNDAEKQKMQASAKELKAIIDEAFSKEEFAAAARN.

Residues V18, E39, K46, Y71, and 85 to 86 (GA) contribute to the NAD(+) site. Q88 and R94 together coordinate substrate. NAD(+) contacts are provided by residues S107, 124–126 (AAN), and S149. Substrate is bound at residue 126-129 (NPVD). Position 154–157 (154–157 (DTAR)) interacts with substrate. Beta-D-fructose 1,6-bisphosphate is bound by residues R159 and H174. H181 functions as the Proton acceptor in the catalytic mechanism. Y226 carries the phosphotyrosine modification. Substrate is bound at residue T235.

It belongs to the LDH/MDH superfamily. LDH family. In terms of assembly, homotetramer.

It localises to the cytoplasm. The catalysed reaction is (S)-lactate + NAD(+) = pyruvate + NADH + H(+). It functions in the pathway fermentation; pyruvate fermentation to lactate; (S)-lactate from pyruvate: step 1/1. Its activity is regulated as follows. Allosterically activated by fructose 1,6-bisphosphate (FBP). Functionally, catalyzes the conversion of lactate to pyruvate. The chain is L-lactate dehydrogenase from Streptococcus mutans serotype c (strain ATCC 700610 / UA159).